Reading from the N-terminus, the 323-residue chain is Flavone synthase cfoJ (323 aa).

It depends on FMN as a cofactor.

It functions in the pathway secondary metabolite biosynthesis; flavonoid biosynthesis. In terms of biological role, FMN-dependent oxidoreductase; part of the gene cluster that mediates the biosynthesis of chlorflavonin, a fungal flavonoid with acetolactate synthase inhibitory activity. Within the pathway, cfoJ acts as a flavone synthase (FNS) and catalyzes the formation of a double bond between C2 and C3, converting the flavanone into a flavone. The pathway begins with the PKS-NRPS hybrid synthetase cfoA that uses benzoic acid or p-hydroxybenzoic acid as a starter unit with four rounds of chain elongation using malonyl-CoA to form the chalcone skeleton. Then, a new type of chalcone isomerase, cfoK, catalyzes the conversion of the chalcone into a flavanone by a histidine-mediated oxa-Michael addition mechanism. The desaturation of flavanone to flavone is catalyzed by a new type of flavone synthase, the flavin mononucleotide (FMN)-dependent oxidoreductase cfoJ. Monooxygenases cfoF, cfoG, and P450 cfoH are responsible for the hydroxylation of the flavonoid skeleton at sites C3, C8, and C2', respectively. Like cfoF, the dehydratase cfoI plays also a role in the hydroxylation of position C3. Methyltransferases cfoB, cfoC, and cfoD then catalyze the methylation of C7-OH, C8-OH, and C3-OH, respectively. Finally, the monooxygenase cfoE is responsible for the chlorination of flavonoid at position C3'. The sequence is that of Flavone synthase cfoJ from Aspergillus candidus.